The sequence spans 738 residues: Catalase-peroxidase (738 aa).

Residues 1-13 (MDGQDIGAGGGCP) are compositionally biased toward gly residues. A disordered region spans residues 1-26 (MDGQDIGAGGGCPFSGANTNKGRRSN). Positions 98–226 (WHSAGTYRTA…LAAVQMGLIY (129 aa)) form a cross-link, tryptophyl-tyrosyl-methioninium (Trp-Tyr) (with M-252). H99 serves as the catalytic Proton acceptor. A cross-link (tryptophyl-tyrosyl-methioninium (Tyr-Met) (with W-98)) is located at residues 226–252 (YVNPEGPDGNPDPIASGRDIRETFARM). Heme b is bound at residue H267.

Belongs to the peroxidase family. Peroxidase/catalase subfamily. As to quaternary structure, homodimer or homotetramer. Heme b is required as a cofactor. Formation of the three residue Trp-Tyr-Met cross-link is important for the catalase, but not the peroxidase activity of the enzyme.

It carries out the reaction H2O2 + AH2 = A + 2 H2O. It catalyses the reaction 2 H2O2 = O2 + 2 H2O. Bifunctional enzyme with both catalase and broad-spectrum peroxidase activity. This Ruegeria sp. (strain TM1040) (Silicibacter sp.) protein is Catalase-peroxidase.